The sequence spans 307 residues: 4-hydroxy-3-methylbut-2-enyl diphosphate reductase (307 aa).

[4Fe-4S] cluster is bound at residue cysteine 13. (2E)-4-hydroxy-3-methylbut-2-enyl diphosphate contacts are provided by histidine 42 and histidine 75. 2 residues coordinate dimethylallyl diphosphate: histidine 42 and histidine 75. Isopentenyl diphosphate contacts are provided by histidine 42 and histidine 75. A [4Fe-4S] cluster-binding site is contributed by cysteine 97. (2E)-4-hydroxy-3-methylbut-2-enyl diphosphate is bound at residue histidine 125. Histidine 125 is a dimethylallyl diphosphate binding site. An isopentenyl diphosphate-binding site is contributed by histidine 125. The Proton donor role is filled by glutamate 127. Threonine 165 contacts (2E)-4-hydroxy-3-methylbut-2-enyl diphosphate. Cysteine 195 contacts [4Fe-4S] cluster. Residues serine 223, serine 224, asparagine 225, and serine 267 each contribute to the (2E)-4-hydroxy-3-methylbut-2-enyl diphosphate site. Dimethylallyl diphosphate contacts are provided by serine 223, serine 224, asparagine 225, and serine 267. The isopentenyl diphosphate site is built by serine 223, serine 224, asparagine 225, and serine 267.

This sequence belongs to the IspH family. [4Fe-4S] cluster is required as a cofactor.

It catalyses the reaction isopentenyl diphosphate + 2 oxidized [2Fe-2S]-[ferredoxin] + H2O = (2E)-4-hydroxy-3-methylbut-2-enyl diphosphate + 2 reduced [2Fe-2S]-[ferredoxin] + 2 H(+). The enzyme catalyses dimethylallyl diphosphate + 2 oxidized [2Fe-2S]-[ferredoxin] + H2O = (2E)-4-hydroxy-3-methylbut-2-enyl diphosphate + 2 reduced [2Fe-2S]-[ferredoxin] + 2 H(+). It functions in the pathway isoprenoid biosynthesis; dimethylallyl diphosphate biosynthesis; dimethylallyl diphosphate from (2E)-4-hydroxy-3-methylbutenyl diphosphate: step 1/1. The protein operates within isoprenoid biosynthesis; isopentenyl diphosphate biosynthesis via DXP pathway; isopentenyl diphosphate from 1-deoxy-D-xylulose 5-phosphate: step 6/6. Functionally, catalyzes the conversion of 1-hydroxy-2-methyl-2-(E)-butenyl 4-diphosphate (HMBPP) into a mixture of isopentenyl diphosphate (IPP) and dimethylallyl diphosphate (DMAPP). Acts in the terminal step of the DOXP/MEP pathway for isoprenoid precursor biosynthesis. This Chlamydia trachomatis serovar A (strain ATCC VR-571B / DSM 19440 / HAR-13) protein is 4-hydroxy-3-methylbut-2-enyl diphosphate reductase.